Here is a 455-residue protein sequence, read N- to C-terminus: Exodeoxyribonuclease 7 large subunit (455 aa).

Belongs to the XseA family. As to quaternary structure, heterooligomer composed of large and small subunits.

The protein localises to the cytoplasm. The catalysed reaction is Exonucleolytic cleavage in either 5'- to 3'- or 3'- to 5'-direction to yield nucleoside 5'-phosphates.. Functionally, bidirectionally degrades single-stranded DNA into large acid-insoluble oligonucleotides, which are then degraded further into small acid-soluble oligonucleotides. The protein is Exodeoxyribonuclease 7 large subunit of Escherichia fergusonii (strain ATCC 35469 / DSM 13698 / CCUG 18766 / IAM 14443 / JCM 21226 / LMG 7866 / NBRC 102419 / NCTC 12128 / CDC 0568-73).